A 299-amino-acid polypeptide reads, in one-letter code: tRNA uridine(34) hydroxylase (299 aa).

The Rhodanese domain occupies 132–226 (AGRPVVMLDT…YFEEVGGAHY (95 aa)). Catalysis depends on Cys-186, which acts as the Cysteine persulfide intermediate.

Belongs to the TrhO family.

It catalyses the reaction uridine(34) in tRNA + AH2 + O2 = 5-hydroxyuridine(34) in tRNA + A + H2O. In terms of biological role, catalyzes oxygen-dependent 5-hydroxyuridine (ho5U) modification at position 34 in tRNAs. The polypeptide is tRNA uridine(34) hydroxylase (Burkholderia mallei (strain NCTC 10247)).